Consider the following 488-residue polypeptide: Serine/threonine-protein kinase 32C (488 aa).

The segment at 1–56 (MRSGAERRGSSAAAPPSSPPPGRARPAGSDVSPALPPPAASQPRARDAGDARAQPR) is disordered. Phosphoserine occurs at positions 10, 17, and 18. Over residues 24 to 33 (ARPAGSDVSP) the composition is skewed to low complexity. A Protein kinase domain is found at 94 to 354 (FQILRAIGKG…LQDMQTAPSL (261 aa)). Residues 100 to 108 (IGKGSFGKV) and lysine 123 contribute to the ATP site. The Proton acceptor role is filled by aspartate 217. Positions 397-406 (HKKKKRLAKN) are enriched in basic residues. 2 disordered regions span residues 397 to 420 (HKKK…QSEN) and 443 to 488 (KRSQ…SGSS).

Belongs to the protein kinase superfamily. Ser/Thr protein kinase family. It depends on Mg(2+) as a cofactor.

The catalysed reaction is L-seryl-[protein] + ATP = O-phospho-L-seryl-[protein] + ADP + H(+). It catalyses the reaction L-threonyl-[protein] + ATP = O-phospho-L-threonyl-[protein] + ADP + H(+). The protein is Serine/threonine-protein kinase 32C of Mus musculus (Mouse).